Reading from the N-terminus, the 64-residue chain is PYLa/PGLa B (64 aa).

A signal peptide spans 1 to 20 (MYKQIFLCLIIAALCATIMA). A propeptide spanning residues 21 to 35 (EASALADADDDDDKR) is cleaved from the precursor. At Leu-59 the chain carries Leucine amide. Residues 60 to 64 (GRRDS) constitute a propeptide that is removed on maturation.

The protein belongs to the gastrin/cholecystokinin family. Magainin subfamily. As to expression, expressed by the skin glands. Synthesized in the stomach and stored in a novel granular multinucleated cell in the gastric mucosa. Stored as active, processed peptides in large granules within the granular gland secretions of the skin.

It is found in the secreted. In terms of biological role, PGLa and PGLa-H display a broad-spectrum of antibacterial activity against a range of Gram-positive and Gram-negative bacteria. PGLa also displays antifungal activity against C.albicans ATCC 14053. PGLa-H shows moderate antibacterial activity against the multidrug-resistant methicillin-resistant S.aureus (MRSA) but exhibits very little hemolytic activity. This chain is PYLa/PGLa B (pgla-b), found in Xenopus laevis (African clawed frog).